The sequence spans 324 residues: Beta-ketoacyl-[acyl-carrier-protein] synthase III (324 aa).

Active-site residues include Cys-114 and His-251. Residues 252–256 (QANLR) form an ACP-binding region. The active site involves Asn-281.

Belongs to the thiolase-like superfamily. FabH family. As to quaternary structure, homodimer.

Its subcellular location is the cytoplasm. It catalyses the reaction malonyl-[ACP] + acetyl-CoA + H(+) = 3-oxobutanoyl-[ACP] + CO2 + CoA. The protein operates within lipid metabolism; fatty acid biosynthesis. Its function is as follows. Catalyzes the condensation reaction of fatty acid synthesis by the addition to an acyl acceptor of two carbons from malonyl-ACP. Catalyzes the first condensation reaction which initiates fatty acid synthesis and may therefore play a role in governing the total rate of fatty acid production. Possesses both acetoacetyl-ACP synthase and acetyl transacylase activities. Its substrate specificity determines the biosynthesis of branched-chain and/or straight-chain of fatty acids. This chain is Beta-ketoacyl-[acyl-carrier-protein] synthase III, found in Rhodobacter capsulatus (Rhodopseudomonas capsulata).